An 804-amino-acid polypeptide reads, in one-letter code: MKMVSLIALLVFATGAQAAPIASKAPAHQPTGSDLPPLPAAAPVAPAAQPSAQAVDPASAAPASDAGSASNADAILDNAENAAGVGTDVATVHTYSLQELGAQSALTMRGAAPLQGLQFGIPADQLVTSARLVVSGAMSPNLQPDNSAVTITLNEQYIGTLRPDPTHPAFGPLSFDINPIFFVSGNRLNFNFASGSKGCADPTNGLQWASVSEHSQLQITTIPLPPRRQLARLPQPFFDKTVRQKVVIPFVLAQTFDPEVLKASGIIASWFGQQTDFRGVNFPVFSTIPQTGNAIVVGVADELPAALGRPSVSGPTLMEVANPSDPNGTVLLVTGRDRDEVITASKGIGFGSSALPVASRMDVAPIDVAPRLANDAPSFIPTSRPVRLGELVPVSALQGEGYTPGVLSVPFRVSPDLYTWRDRPYKLNVRFRAPDGPILDVARSHLDVGINNTYLQSYSLREQSSVVDQLLRRVGVGTQNAGVEQHTLTIPPWMVFGQDQLQFYFDAAPLAQPGCRPGPSLIHMSVDPDSTIDLSNAYHITRMPNLAYMASAGYPFTTYADLSRSAVVLPDHPNGTVVSAYLDLMGFMGATTWYPVSGVDIVSADHVSDVADRNLIVLSTLSNSADVSALLANSAYQISDGRLHMGLRSTLSGVWNIFQDPMSVMSNTHPTEVETTLSGGVGAMVEAESPLASGRTVLALLSGDGQGLDNLVQILGQRKNQAKVQGDLVLAHGDDLTSYRSSPLYTVGTVPLWLIPDWYMHNHPFRVIVVGLVGCLLVVAVLVRALFRHAMFRRRQLQEERQKS.

Residues 1 to 18 (MKMVSLIALLVFATGAQA) form the signal peptide. Over 19-766 (APIASKAPAH…DWYMHNHPFR (748 aa)) the chain is Periplasmic. Residues 24 to 69 (KAPAHQPTGSDLPPLPAAAPVAPAAQPSAQAVDPASAAPASDAGSA) are disordered. Residues 767–787 (VIVVGLVGCLLVVAVLVRALF) traverse the membrane as a helical segment. At 788-804 (RHAMFRRRQLQEERQKS) the chain is on the cytoplasmic side.

Belongs to the AcsB/BcsB family. Tightly associated with the cellulose synthase catalytic subunit.

Its subcellular location is the cell inner membrane. It functions in the pathway glycan metabolism; bacterial cellulose biosynthesis. Its function is as follows. Binds the cellulose synthase activator, bis-(3'-5') cyclic diguanylic acid (c-di-GMP). The protein is Cyclic di-GMP-binding protein (bcsBI) of Komagataeibacter xylinus (Gluconacetobacter xylinus).